The sequence spans 345 residues: Protein sdf-9 (345 aa).

The Tyrosine-protein phosphatase domain maps to 33-284; sequence NRNRVVKIVP…SFIYEAVLDY (252 aa).

Belongs to the protein-tyrosine phosphatase family. Expressed in the 2 embryonic head hypodermal cells XXXL/R.

It is found in the cytoplasm. The protein localises to the cell membrane. Functionally, together with eak-4 and phosphatase eak-6, negatively regulates dauer larva formation downstream of insulin-like receptor daf-2 and in parallel of age-1, pdk-1 and akt-1. This is Protein sdf-9 from Caenorhabditis elegans.